The chain runs to 549 residues: 4-hydroxybutyrate--CoA ligase 2 (549 aa).

Residues 195–203 (TSGTTGLPK), 336–341 (ETYGPH), D425, and R440 contribute to the ATP site. Residues 448-450 (GGE), K506, and 514-516 (CPK) contribute to the CoA site. K530 contributes to the ATP binding site.

This sequence belongs to the ATP-dependent AMP-binding enzyme family. It depends on Mg(2+) as a cofactor. Mn(2+) serves as cofactor.

It catalyses the reaction 4-hydroxybutanoate + ATP + CoA = 4-hydroxybutanoyl-CoA + AMP + diphosphate. The catalysed reaction is acetate + ATP + CoA = acetyl-CoA + AMP + diphosphate. The enzyme catalyses propanoate + ATP + CoA = propanoyl-CoA + AMP + diphosphate. It carries out the reaction a medium-chain fatty acid + ATP + CoA = a medium-chain fatty acyl-CoA + AMP + diphosphate. Functionally, catalyzes the ligation of coenzyme A (CoA) to 4-hydroxybutyrate (4HB). It can also use butyrate, valerate, propionate, acetate and 3-hydroxybutyrate (3HB) as substrates. This is 4-hydroxybutyrate--CoA ligase 2 from Metallosphaera sedula (strain ATCC 51363 / DSM 5348 / JCM 9185 / NBRC 15509 / TH2).